The sequence spans 424 residues: UDP-N-acetylglucosamine 1-carboxyvinyltransferase (424 aa).

22 to 23 (KN) is a binding site for phosphoenolpyruvate. Arg93 provides a ligand contact to UDP-N-acetyl-alpha-D-glucosamine. The active-site Proton donor is the Cys117. Position 117 is a 2-(S-cysteinyl)pyruvic acid O-phosphothioketal (Cys117). UDP-N-acetyl-alpha-D-glucosamine-binding positions include 162 to 165 (KVSV), Asp307, and Ile329.

It belongs to the EPSP synthase family. MurA subfamily.

The protein resides in the cytoplasm. The catalysed reaction is phosphoenolpyruvate + UDP-N-acetyl-alpha-D-glucosamine = UDP-N-acetyl-3-O-(1-carboxyvinyl)-alpha-D-glucosamine + phosphate. The protein operates within cell wall biogenesis; peptidoglycan biosynthesis. In terms of biological role, cell wall formation. Adds enolpyruvyl to UDP-N-acetylglucosamine. The polypeptide is UDP-N-acetylglucosamine 1-carboxyvinyltransferase (Actinobacillus pleuropneumoniae serotype 3 (strain JL03)).